A 704-amino-acid polypeptide reads, in one-letter code: MTIEDLPDIPLEGSSLIGRYPFLFTGSDTSVIFSISAAPMPSDCEFSFFDPNDASCQEILFDPKTSVSELFAILRQWVPQVQQNIDIIGNEILKRGCNVNDRDGLTDMTLLHYTCKSGAHGIGDIETAVKFAAQLIDLGADASLRSRWTNMNALHYASYFDVPELIRVILKTSKPKDVDATCSDFNFGTALHIAAHNLCAGAVKTLLELGANPAFRNDKGQIPAEVVPDPVDMPLEMADAAAIAKEIKQMLLDAVPLPCTSAKAVLPNSDHTTSRAMLTSLGLKLGDRVVIAGQKVGTLRFCGTTEFASGQWAGIELDEPEGKNNGSVGRVQYFKCAPKYGIFAPLSKISKLKDGRKTTTHTPSTRATPHARSQKVDVAHFTSRVNSGLTTSKKETASESTLTLPPSEEPKTVAENDAAQPGSMSSSSSSSSLDHKQSYPKKLTTSSGGKKTLSKSPSLPSRASAGLKSSATSAANNSHHEGALHLGERVLVVGQRVGTIKFFGTTNFAPGYWYGIELEKPHGKNDGSVGGVQYFSCSPRYGIFAPPSRVQRLSDSLDTLSEISSNKQNHSYPGFRRSFSTTSASSQKEINRRNAFAKTKTTLRRSWSSSTTAGGLEGTVKLHEGSQVLLTSSNEMATVRYVGPTDFASGIWLGLELRSAKGKNDGAVGDKRYFTCKPNYGVLVRPSRVTYRGISGSKLIDENC.

3 ANK repeats span residues 65 to 101 (TSVS…NVND), 149 to 180 (TNMN…DVDA), and 186 to 215 (NFGT…NPAF). The CAP-Gly 1 domain maps to 303–345 (GTTEFASGQWAGIELDEPEGKNNGSVGRVQYFKCAPKYGIFAP). The segment at 353–479 (KDGRKTTTHT…SATSAANNSH (127 aa)) is disordered. Composition is skewed to low complexity over residues 360 to 371 (THTPSTRATPHA), 423 to 432 (SMSSSSSSSS), and 440 to 461 (PKKL…SLPS). The 43-residue stretch at 504–546 (GTTNFAPGYWYGIELEKPHGKNDGSVGGVQYFSCSPRYGIFAP) folds into the CAP-Gly 2 domain. Residues serine 556 and serine 608 each carry the phosphoserine modification. Residues 643–685 (GPTDFASGIWLGLELRSAKGKNDGAVGDKRYFTCKPNYGVLVR) enclose the CAP-Gly 3 domain.

The chain is CAP-Gly domain-containing linker protein 4 (Clip4) from Mus musculus (Mouse).